We begin with the raw amino-acid sequence, 536 residues long: CTP synthase (536 aa).

Positions 1-268 are amidoligase domain; it reads MSTKYVFVTG…DNLVCEKLHL (268 aa). Residue Ser14 participates in CTP binding. Ser14 serves as a coordination point for UTP. Position 15–20 (15–20) interacts with ATP; that stretch reads ALGKGI. Tyr55 is an L-glutamine binding site. Asp72 serves as a coordination point for ATP. Mg(2+) is bound by residues Asp72 and Glu142. CTP is bound by residues 149 to 151, 189 to 194, and Lys225; these read DIE and KTKPTQ. UTP-binding positions include 189-194 and Lys225; that span reads KTKPTQ. The Glutamine amidotransferase type-1 domain occupies 293–535; the sequence is KIALVGKYVE…IKAALEENKS (243 aa). Gly355 serves as a coordination point for L-glutamine. The active-site Nucleophile; for glutamine hydrolysis is Cys382. Residues 383-386, Glu406, and Arg463 each bind L-glutamine; that span reads LGMQ. Catalysis depends on residues His508 and Glu510.

It belongs to the CTP synthase family. Homotetramer.

The enzyme catalyses UTP + L-glutamine + ATP + H2O = CTP + L-glutamate + ADP + phosphate + 2 H(+). It carries out the reaction L-glutamine + H2O = L-glutamate + NH4(+). The catalysed reaction is UTP + NH4(+) + ATP = CTP + ADP + phosphate + 2 H(+). The protein operates within pyrimidine metabolism; CTP biosynthesis via de novo pathway; CTP from UDP: step 2/2. Allosterically activated by GTP, when glutamine is the substrate; GTP has no effect on the reaction when ammonia is the substrate. The allosteric effector GTP functions by stabilizing the protein conformation that binds the tetrahedral intermediate(s) formed during glutamine hydrolysis. Inhibited by the product CTP, via allosteric rather than competitive inhibition. Functionally, catalyzes the ATP-dependent amination of UTP to CTP with either L-glutamine or ammonia as the source of nitrogen. Regulates intracellular CTP levels through interactions with the four ribonucleotide triphosphates. This Clostridium beijerinckii (strain ATCC 51743 / NCIMB 8052) (Clostridium acetobutylicum) protein is CTP synthase.